The following is a 258-amino-acid chain: Imidazole glycerol phosphate synthase subunit HisF (258 aa).

Residues Asp-12 and Asp-131 contribute to the active site.

It belongs to the HisA/HisF family. Heterodimer of HisH and HisF.

The protein resides in the cytoplasm. It carries out the reaction 5-[(5-phospho-1-deoxy-D-ribulos-1-ylimino)methylamino]-1-(5-phospho-beta-D-ribosyl)imidazole-4-carboxamide + L-glutamine = D-erythro-1-(imidazol-4-yl)glycerol 3-phosphate + 5-amino-1-(5-phospho-beta-D-ribosyl)imidazole-4-carboxamide + L-glutamate + H(+). Its pathway is amino-acid biosynthesis; L-histidine biosynthesis; L-histidine from 5-phospho-alpha-D-ribose 1-diphosphate: step 5/9. Functionally, IGPS catalyzes the conversion of PRFAR and glutamine to IGP, AICAR and glutamate. The HisF subunit catalyzes the cyclization activity that produces IGP and AICAR from PRFAR using the ammonia provided by the HisH subunit. This chain is Imidazole glycerol phosphate synthase subunit HisF, found in Sinorhizobium fredii (strain NBRC 101917 / NGR234).